Here is a 163-residue protein sequence, read N- to C-terminus: Phospholipase A2 homolog 3 (163 aa).

The signal sequence occupies residues 1–43 (MARGGSFSRLRLRAGVVVAAAAAALLLFAVVAPPAAALNIGLQ). Disulfide bonds link Cys55–Cys83, Cys59–Cys89, Cys64–Cys137, Cys76–Cys96, Cys95–Cys121, and Cys102–Cys114. Ca(2+)-binding residues include Tyr75, Gly77, and Tyr80. Residue His99 is part of the active site. Asp100 is a binding site for Ca(2+).

It belongs to the phospholipase A2 family. Ca(2+) serves as cofactor.

It localises to the secreted. The enzyme catalyses a 1,2-diacyl-sn-glycero-3-phosphocholine + H2O = a 1-acyl-sn-glycero-3-phosphocholine + a fatty acid + H(+). With respect to regulation, inhibited by EGTA. In terms of biological role, PA2 catalyzes the calcium-dependent hydrolysis of the 2-acyl groups in 3-sn-phosphoglycerides. Releases lysophospholipids (LPLs) and free fatty acids (FFAs) from membrane phospholipids in response to hormones and other external stimuli. This is Phospholipase A2 homolog 3 (PLA2-III) from Oryza sativa subsp. japonica (Rice).